Here is a 425-residue protein sequence, read N- to C-terminus: Potassium/proton antiporter CemA (425 aa).

The chain crosses the membrane as a helical span at residues 89-109 (LFLTTVKCLFILLFVPLGINF). An insert region spans residues 159–278 (LSENQIFFGL…KTDFASVFRT (120 aa)). The interval 173–192 (STFPSSEKSQKSEHFSNQDE) is disordered. The segment covering 180-192 (KSQKSEHFSNQDE) has biased composition (basic and acidic residues). The next 3 membrane-spanning stretches (helical) occupy residues 300–320 (IEAI…CYLL), 350–370 (ILFI…ELFF), and 386–406 (IFLL…YLIF).

This sequence belongs to the CemA family.

It is found in the plastid. It localises to the chloroplast inner membrane. The enzyme catalyses K(+)(in) + H(+)(out) = K(+)(out) + H(+)(in). Its function is as follows. Contributes to K(+)/H(+) antiport activity by supporting proton efflux to control proton extrusion and homeostasis in chloroplasts in a light-dependent manner to modulate photosynthesis. Prevents excessive induction of non-photochemical quenching (NPQ) under continuous-light conditions. Indirectly promotes efficient inorganic carbon uptake into chloroplasts. The chain is Potassium/proton antiporter CemA from Tetradesmus obliquus (Green alga).